The following is a 1041-amino-acid chain: Histone deacetylase complex subunit SAP130-B (1041 aa).

Disordered regions lie at residues 1-62 (MSSQ…QEPV), 111-131 (KSTM…SAVP), 572-592 (TNQG…EPKS), 614-769 (TPAG…PSGA), and 806-852 (VLAN…DEER). Over residues 18–30 (VSNSGASVGQNVQ) the composition is skewed to polar residues. The span at 33–42 (EVAREIDVQS) shows a compositional bias: basic and acidic residues. The segment covering 576–592 (VQTSSVSSQQASSEPKS) has biased composition (low complexity). Positions 614 to 641 (TPAGTTVMQSHSQSPGIGSSPAQGSSPR) are enriched in polar residues. Positions 707–728 (PGAADQPSAAASLPSSHHPTAA) are enriched in low complexity.

It belongs to the SAP130 family.

The protein resides in the nucleus. Functionally, acts as a transcriptional repressor. In Xenopus laevis (African clawed frog), this protein is Histone deacetylase complex subunit SAP130-B (sap130-b).